The chain runs to 323 residues: MGSYYSTESTKSNESNETTNNVEGIVDTIGGTVESINSDGIITTSENIVEIVLKENNQPTIFETQESNILEIVTTKIDVLKKILRLIGEVTSECQFSFQNVNEGGRIIVTELHDNKTILLKLVLKGTGFDFYKCSKSKITARLYLPDIDEALGLIGVDDTNTNPIIISMKKDKETSIFITRIDNSGFTEQVELPCRESVGLNIPLPKTTFQGKIVINAEKFRKICERICSVSDLIKISLTDKEVSFSARYYNLDFRYKHSVESKVLGQTIENYFFIDGMLKFIKYFQSSDEISIYIKKDFPLVIHGPFDNFGSIYVFTSPIEE.

The disordered stretch occupies residues 1–21 (MGSYYSTESTKSNESNETTNN). The N-myristoyl glycine; by host moiety is linked to residue Gly-2.

This is an uncharacterized protein from Acanthamoeba polyphaga (Amoeba).